The primary structure comprises 22 residues: Alpha-amylase inhibitor DR4 (22 aa).

Residues serine 1–alanine 22 form a disordered region.

Its function is as follows. Inhibits insect alpha-amylases. In Delonix regia (Royal poinciana), this protein is Alpha-amylase inhibitor DR4.